Consider the following 235-residue polypeptide: Thymidylate kinase (235 aa).

Position 10–17 (10–17 (GINGVEKS)) interacts with ATP.

This sequence belongs to the thymidylate kinase family.

It catalyses the reaction dTMP + ATP = dTDP + ADP. Its pathway is pyrimidine metabolism; dTTP biosynthesis. Functionally, catalyzes the conversion of dTMP to dTDP. The sequence is that of Thymidylate kinase (TMK) from African swine fever virus (isolate Pig/Kenya/KEN-50/1950) (ASFV).